The primary structure comprises 455 residues: Protein chibby homolog 2 (455 aa).

Residues Ser-41, Ser-86, Ser-89, Ser-97, Ser-124, Ser-144, Ser-148, and Ser-150 each carry the phosphoserine modification. A coiled-coil region spans residues 160-197 (KRLAKECLLQENKTLREENRALREENRMLRKENKILQV). Phosphoserine occurs at positions 211 and 225. Residues 240–266 (GRENSTLQLLREENRALQQLLEQRKAY) adopt a coiled-coil conformation. The segment at 267-318 (WAQPDEKAASTEEIKPISSPHEEPHGLLPDPGPGLPSPFEEPKGLPAPPDDS) is disordered. Residues 270-291 (PDEKAASTEEIKPISSPHEEPH) are compositionally biased toward basic and acidic residues. Phosphoserine occurs at positions 276 and 332. Residues 350–421 (SQSLELLREM…KLKLQQKLVI (72 aa)) adopt a coiled-coil conformation.

Belongs to the chibby family. SPERT subfamily. As to quaternary structure, homodimer. Binds to NEK1.

The protein is Protein chibby homolog 2 (CBY2) of Bos taurus (Bovine).